The primary structure comprises 500 residues: MNQRRSESRPGNHRLQAYAEPGKGDSGGAGPLSGSARRGRGGGGAIRVRRPCWSGGAGRGGGPAWAVRLPTVTAGWTWPALRTLSSLRAGPSEPHSPGRRPPRAGRPLCQADPQPGKAARRSLEPDPAQTGPRPARAAGMSEARKGPDEAEESQYDSGIESLRSLRSLPESTSAPASGPSDGSPQPCTHPPGPVKEPQEKEDADGERADSTYGSSSLTYTLSLLGGPEAEDPAPRLPLPHVGALSPQQLEALTYISEDGDTLVHLAVIHEAPAVLLCCLALLPQEVLDIQNNLYQTALHLAVHLDQPGAVRALVLKGASRALQDRHGDTALHVACQRQHLACARCLLEGRPEPGRGTSHSLDLQLQNWQGLACLHIATLQKNQPLMELLLRNGADIDVQEGTSGKTALHLAVETQERGLVQFLLQAGAQVDARMLNGCTPLHLAAGRGLMGISSTLCKAGADSLLRNVEDETPQDLTEESLVLLPFDDLKISGKLLLCTD.

The segment covering 1–10 has biased composition (basic and acidic residues); that stretch reads MNQRRSESRP. Disordered stretches follow at residues 1–66, 84–215, and 222–241; these read MNQR…PAWA, LSSL…YGSS, and SLLG…LPHV. 3 positions are modified to phosphoserine: Ser-157, Ser-161, and Ser-183. Over residues 161-186 the composition is skewed to low complexity; that stretch reads SLRSLRSLPESTSAPASGPSDGSPQP. Positions 196–209 are enriched in basic and acidic residues; that stretch reads EPQEKEDADGERAD. ANK repeat units lie at residues 258 to 291, 293 to 322, 326 to 355, 369 to 398, 403 to 432, and 436 to 465; these read DGDT…DIQN, LYQT…SRAL, HGDT…EPGR, QGLA…DIDV, SGKT…QVDA, and NGCT…DSLL.

It belongs to the NF-kappa-B inhibitor family. Interacts with RELA, REL, NFKB1 nuclear factor NF-kappa-B p50 subunit and NFKB2 nuclear factor NF-kappa-B p52 subunit. Interacts with HNRNPA2B1; the interaction may be mediated by the RRM2 domain of HNRNPA2B1, and HNRNPA2B1 may interact simultaneously with FAM76B and either NFKBIA or NFKBIE to form a complex. Serine phosphorylated; followed by proteasome-dependent degradation. As to expression, highly expressed in spleen, testis and lung, followed by kidney, pancreas, heart, placenta and brain. Also expressed in granulocytes and macrophages.

Its subcellular location is the cytoplasm. Its function is as follows. Sequesters NF-kappa-B transcription factor complexes in the cytoplasm, thereby inhibiting their activity. Sequestered complexes include NFKB1-RELA (p50-p65) and NFKB1-REL (p50-c-Rel) complexes. Limits B-cell activation in response to pathogens, and also plays an important role in B-cell development. This is NF-kappa-B inhibitor epsilon (NFKBIE) from Homo sapiens (Human).